Reading from the N-terminus, the 222-residue chain is 2-C-methyl-D-erythritol 4-phosphate cytidylyltransferase (222 aa).

Belongs to the IspD/TarI cytidylyltransferase family. IspD subfamily.

The catalysed reaction is 2-C-methyl-D-erythritol 4-phosphate + CTP + H(+) = 4-CDP-2-C-methyl-D-erythritol + diphosphate. The protein operates within isoprenoid biosynthesis; isopentenyl diphosphate biosynthesis via DXP pathway; isopentenyl diphosphate from 1-deoxy-D-xylulose 5-phosphate: step 2/6. Functionally, catalyzes the formation of 4-diphosphocytidyl-2-C-methyl-D-erythritol from CTP and 2-C-methyl-D-erythritol 4-phosphate (MEP). The protein is 2-C-methyl-D-erythritol 4-phosphate cytidylyltransferase of Thermotoga sp. (strain RQ2).